Reading from the N-terminus, the 152-residue chain is MTITDLVLILFIAALLAYALYDQFIMPRRNGPTLLSIALLRRGRVDSVIFVGLVAILIYNNVTSHGAQMTTWLLSALALMGFYIFWIRTPRIIFKQRGFFFANVWIEYNRIKEMNLSEDGVLVMQLEQRRLLIRVRNIDNLEKIYKLLIENQ.

Helical transmembrane passes span 6-26, 45-65, and 67-87; these read LVLILFIAALLAYALYDQFIM, VDSVIFVGLVAILIYNNVTSH, and AQMTTWLLSALALMGFYIFWI.

This sequence belongs to the UPF0266 family.

Its subcellular location is the cell inner membrane. The sequence is that of UPF0266 membrane protein YobD from Salmonella enteritidis PT4 (strain P125109).